The sequence spans 113 residues: B-type lectin plumieribetin (113 aa).

Residues 1 to 109 (NYLSKNDELR…STEIWNSDKN (109 aa)) enclose the Bulb-type lectin domain.

As to quaternary structure, homotetramer. Interacts with alpha-1-beta-1 integrin (ITGA1/ITGB1). Post-translationally, not glycosylated. Not N-glycosylated and not O-glycosylated with the mostcommon O-linked glycoconjugates. In terms of processing, the N-terminus is blocked. As to expression, expressed by sting venom glands and is also found in skin mucus. Not found in other tissues tested.

Its subcellular location is the secreted. Functionally, may contribute to some of the local and systemic effects of envenomation by the scorpionfish. Preferentially recognizes mannose-containing carbohydrate structures, but its interaction with single mannose residues is weak. Potently inhibits alpha-1-beta-1 integrin (ITGA1/ITGB1) binding to basement membrane collagen IV in a divalent cation-independent manner. In addition, moderately inhibits both laminin binding integrins alpha-3-beta-1 (ITGA3/ITGB1) and alpha-7-beta-1 (ITGA7/ITGB1). Weakens the cell-collagen contacts, reduces cell spreading, and alters the actin cytoskeleton, after the compensating alpha-2-beta-1 integrin is blocked. On the cellular level, fails to completely detach hepatocarcinoma HepG2 cells and primary arterial smooth muscle cells from the collagen IV fragment CB3. The protein is B-type lectin plumieribetin of Scorpaena plumieri (Spotted scorpionfish).